Here is a 443-residue protein sequence, read N- to C-terminus: Ribosomal protein uS12 methylthiotransferase RimO (443 aa).

The MTTase N-terminal domain maps to 10–120; it reads PRVGFVSLGC…VVKAVHQHLP (111 aa). [4Fe-4S] cluster contacts are provided by C19, C55, C84, C151, C155, and C158. Residues 137–375 form the Radical SAM core domain; that stretch reads LTPAHYAYLK…DFQEDISTQR (239 aa). One can recognise a TRAM domain in the interval 377 to 443; it reads ERWIGRDITV…VHDLYARPLP (67 aa).

Belongs to the methylthiotransferase family. RimO subfamily. It depends on [4Fe-4S] cluster as a cofactor.

The protein localises to the cytoplasm. The catalysed reaction is L-aspartate(89)-[ribosomal protein uS12]-hydrogen + (sulfur carrier)-SH + AH2 + 2 S-adenosyl-L-methionine = 3-methylsulfanyl-L-aspartate(89)-[ribosomal protein uS12]-hydrogen + (sulfur carrier)-H + 5'-deoxyadenosine + L-methionine + A + S-adenosyl-L-homocysteine + 2 H(+). Its function is as follows. Catalyzes the methylthiolation of an aspartic acid residue of ribosomal protein uS12. The sequence is that of Ribosomal protein uS12 methylthiotransferase RimO from Aromatoleum aromaticum (strain DSM 19018 / LMG 30748 / EbN1) (Azoarcus sp. (strain EbN1)).